The sequence spans 309 residues: Ras-like protein 1 (309 aa).

Residues 20–25, 36–42, 66–67, 123–126, and 153–155 contribute to the GTP site; these read GVGKSA, VDEYDPT, AG, NKLD, and SAK. The Effector region motif lies at 39 to 47; the sequence is YDPTIEDSY. Positions 177 to 303 are disordered; that stretch reads KYNSMNRQLD…SANARKESSG (127 aa). 2 stretches are compositionally biased toward polar residues: residues 179–188 and 209–235; these read NSMNRQLDNT and NGSYVLDNSLTNAGTGSSSKSAVNHNG. The span at 236-245 shows a compositional bias: basic and acidic residues; sequence ETTKRTDEKN. Positions 246–256 are enriched in low complexity; it reads YVNQNNNNEGN. Residues 257–296 are compositionally biased toward polar residues; that stretch reads TKYSSNGNGNRSDISRGNQNNALNSRSKQSAEPQKNSSAN. C305 carries S-palmitoyl cysteine lipidation. C306 carries the cysteine methyl ester modification. A lipid anchor (S-farnesyl cysteine) is attached at C306. The propeptide at 307–309 is removed in mature form; it reads IIC.

Belongs to the small GTPase superfamily. Ras family. Farnesylated by RAM1-RAM2, which is required for targeting RAS1 to the cytoplasmic site of the endoplasmic reticulum, where proteolytic processing of the C-terminus by RCE1 and methylation of the resulting carboxyl group by STE14 occurs. In terms of processing, palmitoylated by the ERF2-SHR5 complex, which is required for proper plasma membrane localization of RAS1.

The protein resides in the cell membrane. It carries out the reaction GTP + H2O = GDP + phosphate + H(+). With respect to regulation, alternates between an inactive form bound to GDP and an active form bound to GTP. Activated by guanine nucleotide-exchange factor (GEF) CDC25 and inactivated by GTPase-activating proteins (GAPs) IRA1 and IRA2. Its function is as follows. The S.cerevisiae Ras proteins modulate the activity of the adenylate cyclase catalytic subunit and therefore affect the biosynthesis of cyclic-AMP. This is Ras-like protein 1 (RAS1) from Saccharomyces cerevisiae (strain ATCC 204508 / S288c) (Baker's yeast).